A 130-amino-acid polypeptide reads, in one-letter code: Transcription antitermination protein NusB (130 aa).

This sequence belongs to the NusB family.

In terms of biological role, involved in transcription antitermination. Required for transcription of ribosomal RNA (rRNA) genes. Binds specifically to the boxA antiterminator sequence of the ribosomal RNA (rrn) operons. The protein is Transcription antitermination protein NusB of Bacillus mycoides (strain KBAB4) (Bacillus weihenstephanensis).